The following is a 714-amino-acid chain: Protein HAPLESS 2-B (714 aa).

The first 33 residues, 1–33 (MAPRRRRRAARSSRPLLLALLAAAVNNFAPAGG), serve as a signal peptide directing secretion. Topologically, residues 34–552 (VEVLAKSRLE…FFTGTTCSTR (519 aa)) are extracellular. Cystine bridges form between Cys45–Cys59, Cys134–Cys164, Cys146–Cys194, Cys165–Cys321, Cys167–Cys177, Cys304–Cys328, and Cys441–Cys479. A helical membrane pass occupies residues 553–573 (CWSFLKFVIHGLLLVAVLWLL). Over 574-714 (HRKGLFDPLY…HGDRRHHAWH (141 aa)) the chain is Cytoplasmic. The segment at 597-619 (RARRRHKRAHSHRHSHHHDAHKR) is disordered. The span at 598–619 (ARRRHKRAHSHRHSHHHDAHKR) shows a compositional bias: basic residues.

It belongs to the HAP2/GCS1 family.

It localises to the endoplasmic reticulum membrane. It is found in the cell membrane. In terms of biological role, required for male fertility. Plays a role in pollen tube guidance and successful gamete attachment. Essential for the fusion of gametes during double fertilization, where one male gamete fuses with the egg to produce a zygote, and another male gamete fuses with the central cell to produce the endosperm. Mediates the fusion of cell membranes. Not required for pollen tube outgrowth. This Oryza sativa subsp. japonica (Rice) protein is Protein HAPLESS 2-B (HAP2B).